Here is a 343-residue protein sequence, read N- to C-terminus: Phosphatidylglycerol--prolipoprotein diacylglyceryl transferase (343 aa).

4 consecutive transmembrane segments (helical) span residues 22 to 42, 54 to 74, 97 to 117, and 123 to 143; these read IPIRAYALCIIAGIVAALIIG, GVIYDIALWAVPFGLVGGRLY, VWEGGLGIWGAVALGGVGAWI, and GIPLPAFADAIAPGIVLAQAI. A 1,2-diacyl-sn-glycero-3-phospho-(1'-sn-glycerol) is bound at residue Arg-145. 2 helical membrane-spanning segments follow: residues 193-213 and 257-277; these read VVHPTFLYELLWNVLVFVLLI and VNSFTSTLVFVGAVAYILLAP. The interval 283 to 343 is disordered; the sequence is PATLGGTPSS…SADNSGIVEK (61 aa). Positions 295–325 are enriched in acidic residues; sequence GGDDTAETEATADTEDTEDTEDGVTDAPEAD.

This sequence belongs to the Lgt family.

The protein localises to the cell membrane. The catalysed reaction is L-cysteinyl-[prolipoprotein] + a 1,2-diacyl-sn-glycero-3-phospho-(1'-sn-glycerol) = an S-1,2-diacyl-sn-glyceryl-L-cysteinyl-[prolipoprotein] + sn-glycerol 1-phosphate + H(+). It functions in the pathway protein modification; lipoprotein biosynthesis (diacylglyceryl transfer). Catalyzes the transfer of the diacylglyceryl group from phosphatidylglycerol to the sulfhydryl group of the N-terminal cysteine of a prolipoprotein, the first step in the formation of mature lipoproteins. The protein is Phosphatidylglycerol--prolipoprotein diacylglyceryl transferase of Mycobacteroides abscessus (strain ATCC 19977 / DSM 44196 / CCUG 20993 / CIP 104536 / JCM 13569 / NCTC 13031 / TMC 1543 / L948) (Mycobacterium abscessus).